A 604-amino-acid chain; its full sequence is Uptake hydrogenase large subunit (604 aa).

Positions 76, 79, 583, and 586 each coordinate Ni(2+).

Belongs to the [NiFe]/[NiFeSe] hydrogenase large subunit family. As to quaternary structure, heterodimer of a large and a small subunit. Ni(2+) serves as cofactor.

It is found in the cell membrane. The enzyme catalyses H2 + A = AH2. Functionally, this enzyme recycles the H(2) produced by nitrogenase to increase the production of ATP and to protect nitrogenase against inhibition or damage by O(2) under carbon- or phosphate-limited conditions. This Afipia carboxidovorans (strain ATCC 49405 / DSM 1227 / KCTC 32145 / OM5) (Oligotropha carboxidovorans) protein is Uptake hydrogenase large subunit (hoxL).